Consider the following 737-residue polypeptide: 1,4-alpha-glucan branching enzyme GlgB (737 aa).

D399 acts as the Nucleophile in catalysis. E452 (proton donor) is an active-site residue.

This sequence belongs to the glycosyl hydrolase 13 family. GlgB subfamily. In terms of assembly, monomer.

The enzyme catalyses Transfers a segment of a (1-&gt;4)-alpha-D-glucan chain to a primary hydroxy group in a similar glucan chain.. It functions in the pathway glycan biosynthesis; glycogen biosynthesis. Functionally, catalyzes the formation of the alpha-1,6-glucosidic linkages in glycogen by scission of a 1,4-alpha-linked oligosaccharide from growing alpha-1,4-glucan chains and the subsequent attachment of the oligosaccharide to the alpha-1,6 position. The sequence is that of 1,4-alpha-glucan branching enzyme GlgB from Chlamydia muridarum (strain MoPn / Nigg).